Reading from the N-terminus, the 467-residue chain is UDP-N-acetylmuramoylalanine--D-glutamate ligase (467 aa).

115 to 121 (GTDGKTT) serves as a coordination point for ATP.

Belongs to the MurCDEF family.

The protein resides in the cytoplasm. The catalysed reaction is UDP-N-acetyl-alpha-D-muramoyl-L-alanine + D-glutamate + ATP = UDP-N-acetyl-alpha-D-muramoyl-L-alanyl-D-glutamate + ADP + phosphate + H(+). Its pathway is cell wall biogenesis; peptidoglycan biosynthesis. Functionally, cell wall formation. Catalyzes the addition of glutamate to the nucleotide precursor UDP-N-acetylmuramoyl-L-alanine (UMA). In Chlorobaculum parvum (strain DSM 263 / NCIMB 8327) (Chlorobium vibrioforme subsp. thiosulfatophilum), this protein is UDP-N-acetylmuramoylalanine--D-glutamate ligase.